The chain runs to 725 residues: ABC transporter G family member 19 (725 aa).

The ABC transporter domain maps to 73 to 325; that stretch reads LNFNNLQYDV…FSDFGRPIPE (253 aa). An ATP-binding site is contributed by 117 to 124; it reads GASGAGKS. Positions 419-629 constitute an ABC transmembrane type-2 domain; sequence FETFILAKRY…PYEAVLINEF (211 aa). 7 helical membrane passes run 438-458, 473-493, 515-535, 537-557, 577-597, 606-626, and 698-718; these read LVGTRIATVMVTGCLLATVYW, LFAFVVPTMFYCCLDNVPVFI, ISHSLVSLPQLLAPSLVFSAI, FWTVGLSGGLEGFVFYCLLIY, IMLCYMVSITYLAYCLLLSGF, FYWTWFHYISILKYPYEAVLI, and LWITFASGLFFRILFYFALLF.

It belongs to the ABC transporter superfamily. ABCG family. Eye pigment precursor importer (TC 3.A.1.204) subfamily.

It localises to the vacuole membrane. Functionally, confers selective resistance to kanamycin. This Arabidopsis thaliana (Mouse-ear cress) protein is ABC transporter G family member 19 (ABCG19).